The chain runs to 412 residues: Serine hydroxymethyltransferase (412 aa).

Residues leucine 117 and 121–123 each bind (6S)-5,6,7,8-tetrahydrofolate; that span reads GHL. An N6-(pyridoxal phosphate)lysine modification is found at lysine 226.

It belongs to the SHMT family. In terms of assembly, homodimer. Pyridoxal 5'-phosphate is required as a cofactor.

The protein localises to the cytoplasm. The enzyme catalyses (6R)-5,10-methylene-5,6,7,8-tetrahydrofolate + glycine + H2O = (6S)-5,6,7,8-tetrahydrofolate + L-serine. Its pathway is one-carbon metabolism; tetrahydrofolate interconversion. The protein operates within amino-acid biosynthesis; glycine biosynthesis; glycine from L-serine: step 1/1. Its function is as follows. Catalyzes the reversible interconversion of serine and glycine with tetrahydrofolate (THF) serving as the one-carbon carrier. This reaction serves as the major source of one-carbon groups required for the biosynthesis of purines, thymidylate, methionine, and other important biomolecules. Also exhibits THF-independent aldolase activity toward beta-hydroxyamino acids, producing glycine and aldehydes, via a retro-aldol mechanism. The sequence is that of Serine hydroxymethyltransferase from Staphylococcus saprophyticus subsp. saprophyticus (strain ATCC 15305 / DSM 20229 / NCIMB 8711 / NCTC 7292 / S-41).